The primary structure comprises 896 residues: Zinc finger protein 574 (896 aa).

3 C2H2-type zinc fingers span residues 16–38, 76–98, and 126–148; these read YVCSECNQLYGSLEEVLMHQNSH, YQCLECGQLLMSPSQLLEHQELH, and YECVDCKALFASQELWLNHRQTH. Residue serine 164 is modified to Phosphoserine. The C2H2-type 4 zinc finger occupies 214 to 236; sequence YKCSECSQLFQLPADFLEHQATH. Residues 239-301 are disordered; the sequence is APVPESQEPA…RARRNNSGEA (63 aa). The segment covering 247–257 has biased composition (polar residues); the sequence is PALQQEVQASS. The span at 274–287 shows a compositional bias: basic and acidic residues; the sequence is HSYELRNGEAIGRD. Serine 298 is modified (phosphoserine). 4 consecutive C2H2-type zinc fingers follow at residues 309-331, 336-358, 364-386, and 392-413; these read LFCSACDQLFLSPHQLQQHLRSH, FKCPLCSRVFPSPSSLDQHLGDH, FLCVDCGLAFGTEALLLAHRRAH, and HSCPCGKTFVNLTKFLYHRRTH. Residues 434-460 are disordered; the sequence is FPEPAPAETGEPEAPEPPVSEETSAGP. 6 C2H2-type zinc fingers span residues 466–489, 495–517, 523–545, 551–573, 579–601, and 607–630; these read YRCLLCSREFGKALQLTRHQRFVH, HKCSICGKMFKKKSHVRNHLRTH, FPCPDCSKPFNSPANLARHRLTH, YRCGDCGKAFTQSSTLRQHRLVH, YRCQECGVRFHRPYRLLMHRYHH, and YKCRECPRSFLLRRLLEVHQLVVH. A C2H2-type 15; degenerate zinc finger spans residues 636-659; that stretch reads HRCPSCGAAFPSSLRLREHRCAAA. The segment at 667-689 adopts a C2H2-type 16 zinc-finger fold; sequence FECGTCGKKVGSAARLQAHEAAH. A disordered region spans residues 687-733; sequence AAHAAAGPGEVLAKEPPAPRAPRATRAPVASPAGLGGTATASPAAPA. Residues 707 to 732 show a composition bias toward low complexity; that stretch reads APRATRAPVASPAGLGGTATASPAAP. Serine 717 carries the post-translational modification Phosphoserine. Threonine 724 bears the Phosphothreonine mark. Serine 728 bears the Phosphoserine mark. 4 consecutive C2H2-type zinc fingers follow at residues 738 to 760, 766 to 788, 794 to 816, and 822 to 844; these read LECSECKKLFSTETSLQVHRRIH, YPCPDCGKAFRQSTHLKDHRRLH, FACEVCGKAFAISMRLAEHRRIH, and YSCPDCGKSYRSFSNLWKHRKTH. Arginine 832 bears the Asymmetric dimethylarginine mark.

It belongs to the krueppel C2H2-type zinc-finger protein family.

It is found in the nucleus. May be involved in transcriptional regulation. This is Zinc finger protein 574 (ZNF574) from Macaca fascicularis (Crab-eating macaque).